We begin with the raw amino-acid sequence, 495 residues long: Probable leucine aminopeptidase 2 (495 aa).

Positions 1–21 are cleaved as a signal peptide; the sequence is MKSQLLSLAVAVTTISQGVVG. The region spanning 130–216 is the PA domain; that stretch reads MAELVVAKNN…SQEDGKNLAT (87 aa). N-linked (GlcNAc...) asparagine glycans are attached at residues Asn142 and Asn235. Positions 259 and 271 each coordinate Zn(2+). A glycan (N-linked (GlcNAc...) asparagine) is linked at Asn272. The Proton acceptor role is filled by Glu303. Residues Glu304 and Asp332 each coordinate Zn(2+). Asn352 is a glycosylation site (N-linked (GlcNAc...) asparagine). His430 contributes to the Zn(2+) binding site.

The protein belongs to the peptidase M28 family. M28A subfamily. Monomer. It depends on Zn(2+) as a cofactor.

It localises to the secreted. Functionally, extracellular aminopeptidase that releases a wide variety of amino acids from natural peptides and contributes to pathogenicity. This is Probable leucine aminopeptidase 2 (LAP2) from Trichophyton verrucosum (strain HKI 0517).